Reading from the N-terminus, the 371-residue chain is Zinc finger CCCH domain-containing protein 21 (371 aa).

The disordered stretch occupies residues 1 to 64 (MPPKQQPKAD…AAKKKKEEEK (64 aa)). The span at 10-23 (DLAKKQKQVEDKTF) shows a compositional bias: basic and acidic residues. Residues 34 to 46 (VQKYVQSLKQSVQ) show a composition bias toward polar residues. C3H1-type zinc fingers lie at residues 88–115 (DPKS…HDLN) and 159–197 (KPTD…HALP). Coiled-coil stretches lie at residues 205 to 237 (QMKA…ATQM) and 283 to 317 (FVDD…GTSK). The segment at 290-371 (CEEYEREREQ…IREPNDEGSS (82 aa)) is disordered. A compositionally biased stretch (basic and acidic residues) spans 292–312 (EYEREREQEETEQKAKNKEAE). Acidic residues predominate over residues 330-352 (NEEEEDDDDDDDDLDMDELDELE).

In Arabidopsis thaliana (Mouse-ear cress), this protein is Zinc finger CCCH domain-containing protein 21.